The primary structure comprises 167 residues: Troponin C-akin-1 protein (167 aa).

Position 17 to 20 (17 to 20 (YGAL)) interacts with substrate. Glutamate 92 functions as the Proton acceptor in the catalytic mechanism.

This sequence belongs to the gamma-glutamylcyclotransferase family. In terms of tissue distribution, in embryos, expression is seen in heart cells of the dorsal vessel and hindgut visceral mesoderm.

Its function is as follows. Putative gamma-glutamylcyclotransferase. This Drosophila melanogaster (Fruit fly) protein is Troponin C-akin-1 protein (Tina-1).